A 398-amino-acid polypeptide reads, in one-letter code: Phosphoglycerate kinase (398 aa).

Substrate is bound by residues 21–23 (DFN), R36, 59–62 (HLGR), R119, and R157. Residues K208, G296, E327, and 354 to 357 (GGDS) contribute to the ATP site.

It belongs to the phosphoglycerate kinase family. Monomer.

It localises to the cytoplasm. It carries out the reaction (2R)-3-phosphoglycerate + ATP = (2R)-3-phospho-glyceroyl phosphate + ADP. Its pathway is carbohydrate degradation; glycolysis; pyruvate from D-glyceraldehyde 3-phosphate: step 2/5. This Streptococcus pneumoniae serotype 19F (strain G54) protein is Phosphoglycerate kinase.